The sequence spans 85 residues: Large ribosomal subunit protein bL27 (85 aa).

A disordered region spans residues 1-20 (MAHKKAAGSTRNGRDSEAKR).

Belongs to the bacterial ribosomal protein bL27 family.

The chain is Large ribosomal subunit protein bL27 from Colwellia psychrerythraea (strain 34H / ATCC BAA-681) (Vibrio psychroerythus).